Here is a 547-residue protein sequence, read N- to C-terminus: Elongator complex protein 3 (547 aa).

The region spanning 82-372 is the Radical SAM core domain; that stretch reads RTASGIAVVA…YRVQRDIPMP (291 aa). Positions 99, 109, and 112 each coordinate [4Fe-4S] cluster. Residue S161 is modified to Phosphoserine. K164 lines the acetyl-CoA pocket. Y202 bears the Phosphotyrosine mark. Position 229 is an N6-methyllysine (K229). Y251 is subject to Phosphotyrosine. Positions 396–547 constitute an N-acetyltransferase domain; it reads IQCRDVRTRE…QGPYMVKTLE (152 aa). Acetyl-CoA contacts are provided by residues 474–477, 497–499, and Y530; these read ELHV and FGM.

This sequence belongs to the ELP3 family. Component of the elongator complex which consists of ELP1, ELP2, ELP3, ELP4, ELP5 and ELP6. ELP1, ELP2 and ELP3 form the elongator core complex. Interacts with alpha-tubulin. The cofactor is [4Fe-4S] cluster. Tyrosine-phosphorylated; phosphorylation on Tyr-202 does not affect elongator complex integrity or ELP3 protein stability. Also serine/threonine-phosphorylated.

Its subcellular location is the cytoplasm. It is found in the nucleus. The enzyme catalyses uridine(34) in tRNA + acetyl-CoA + S-adenosyl-L-methionine + H2O = 5-(carboxymethyl)uridine(34) in tRNA + 5'-deoxyadenosine + L-methionine + CoA + 2 H(+). Its pathway is tRNA modification; 5-methoxycarbonylmethyl-2-thiouridine-tRNA biosynthesis. Catalytic tRNA acetyltransferase subunit of the elongator complex which is required for multiple tRNA modifications, including mcm5U (5-methoxycarbonylmethyl uridine), mcm5s2U (5-methoxycarbonylmethyl-2-thiouridine), and ncm5U (5-carbamoylmethyl uridine). In the elongator complex, acts as a tRNA uridine(34) acetyltransferase by mediating formation of carboxymethyluridine in the wobble base at position 34 in tRNAs. May also act as a protein lysine acetyltransferase by mediating acetylation of target proteins; such activity is however unclear in vivo and recent evidences suggest that ELP3 primarily acts as a tRNA acetyltransferase. Involved in neurogenesis: regulates the migration and branching of projection neurons in the developing cerebral cortex, through a process depending on alpha-tubulin acetylation. Required for acetylation of GJA1 in the developing cerebral cortex. In Bos taurus (Bovine), this protein is Elongator complex protein 3.